A 427-amino-acid chain; its full sequence is tRNA(Ile)-lysidine synthase (427 aa).

27–32 (SGGVDS) lines the ATP pocket.

This sequence belongs to the tRNA(Ile)-lysidine synthase family.

The protein resides in the cytoplasm. The catalysed reaction is cytidine(34) in tRNA(Ile2) + L-lysine + ATP = lysidine(34) in tRNA(Ile2) + AMP + diphosphate + H(+). In terms of biological role, ligates lysine onto the cytidine present at position 34 of the AUA codon-specific tRNA(Ile) that contains the anticodon CAU, in an ATP-dependent manner. Cytidine is converted to lysidine, thus changing the amino acid specificity of the tRNA from methionine to isoleucine. The protein is tRNA(Ile)-lysidine synthase of Streptococcus equi subsp. equi (strain 4047).